A 101-amino-acid chain; its full sequence is Signal recognition particle 19 kDa protein (101 aa).

It belongs to the SRP19 family. Part of the signal recognition particle protein translocation system, which is composed of SRP and FtsY. Archaeal SRP consists of a 7S RNA molecule of 300 nucleotides and two protein subunits: SRP54 and SRP19.

The protein localises to the cytoplasm. Functionally, involved in targeting and insertion of nascent membrane proteins into the cytoplasmic membrane. Binds directly to 7S RNA and mediates binding of the 54 kDa subunit of the SRP. This is Signal recognition particle 19 kDa protein from Methanosarcina mazei (strain ATCC BAA-159 / DSM 3647 / Goe1 / Go1 / JCM 11833 / OCM 88) (Methanosarcina frisia).